The following is a 330-amino-acid chain: DNA primase small subunit PriS (330 aa).

Active-site residues include aspartate 101 and aspartate 103. Zn(2+) contacts are provided by cysteine 116, cysteine 119, cysteine 128, and aspartate 131. The active site involves aspartate 235.

It belongs to the eukaryotic-type primase small subunit family. Heterodimer of a small subunit (PriS) and a large subunit (PriL). It depends on Mg(2+) as a cofactor. Requires Mn(2+) as cofactor.

In terms of biological role, catalytic subunit of DNA primase, an RNA polymerase that catalyzes the synthesis of short RNA molecules used as primers for DNA polymerase during DNA replication. The small subunit contains the primase catalytic core and has DNA synthesis activity on its own. Binding to the large subunit stabilizes and modulates the activity, increasing the rate of DNA synthesis while decreasing the length of the DNA fragments, and conferring RNA synthesis capability. The DNA polymerase activity may enable DNA primase to also catalyze primer extension after primer synthesis. May also play a role in DNA repair. Possesses a template-independent 3'-terminal nucleotidyl transferase activity. The sequence is that of DNA primase small subunit PriS from Saccharolobus solfataricus (strain ATCC 35092 / DSM 1617 / JCM 11322 / P2) (Sulfolobus solfataricus).